Here is a 448-residue protein sequence, read N- to C-terminus: Tryptophan dimethylallyltransferase 2 (448 aa).

L-tryptophan is bound by residues 80–81 (IL) and Glu89. Substrate is bound by residues Arg100, Lys186, and Tyr188. Residues Tyr190 and Arg249 each coordinate L-tryptophan. Residues Arg262, Lys264, Tyr266, Gln348, Tyr350, Tyr414, and Tyr418 each coordinate substrate.

The protein belongs to the tryptophan dimethylallyltransferase family. In terms of assembly, homodimer.

The enzyme catalyses L-tryptophan + dimethylallyl diphosphate = 4-(3-methylbut-2-enyl)-L-tryptophan + diphosphate. Its pathway is alkaloid biosynthesis; ergot alkaloid biosynthesis. In terms of biological role, catalyzes the first step of ergot alkaloid biosynthesis. Ergot alkaloids, which are produced by endophyte fungi, can enhance plant host fitness, but also cause livestock toxicosis to host plants. This is Tryptophan dimethylallyltransferase 2 (dmaW2) from Claviceps purpurea (strain 20.1) (Ergot fungus).